A 127-amino-acid polypeptide reads, in one-letter code: Large ribosomal subunit protein bL19 (127 aa).

Belongs to the bacterial ribosomal protein bL19 family.

Its function is as follows. This protein is located at the 30S-50S ribosomal subunit interface and may play a role in the structure and function of the aminoacyl-tRNA binding site. This Myxococcus xanthus (strain DK1622) protein is Large ribosomal subunit protein bL19.